The sequence spans 292 residues: ER membrane protein complex subunit 2 (292 aa).

A TPR repeat occupies A163–N196.

It belongs to the EMC2 family. Component of the ER membrane protein complex (EMC), which is composed of EMC1, EMC2, EMC3, EMC4, EMC5 and EMC6.

It is found in the endoplasmic reticulum membrane. Functionally, part of the endoplasmic reticulum membrane protein complex (EMC) that enables the energy-independent insertion into endoplasmic reticulum membranes of newly synthesized membrane proteins. Preferentially accommodates proteins with transmembrane domains that are weakly hydrophobic or contain destabilizing features such as charged and aromatic residues. Involved in the cotranslational insertion of multi-pass membrane proteins in which stop-transfer membrane-anchor sequences become ER membrane spanning helices. It is also required for the post-translational insertion of tail-anchored/TA proteins in endoplasmic reticulum membranes. By mediating the proper cotranslational insertion of N-terminal transmembrane domains in an N-exo topology, with translocated N-terminus in the lumen of the ER, controls the topology of multi-pass membrane proteins. This Saccharomyces cerevisiae (strain ATCC 204508 / S288c) (Baker's yeast) protein is ER membrane protein complex subunit 2 (EMC2).